The chain runs to 301 residues: Outer membrane porin G (301 aa).

An N-terminal signal peptide occupies residues 1–21; the sequence is MKKLLPCTALVMCAGMACAQA. The next 16 beta stranded transmembrane spans lie at 27 to 35, 47 to 57, 64 to 72, 89 to 98, 104 to 112, 129 to 136, 149 to 158, 172 to 182, 186 to 195, 201 to 209, 213 to 222, 230 to 238, 240 to 248, 254 to 265, 269 to 279, and 289 to 300; these read WHFNIGAMY, MDGLAEPSVYF, WRIALAYYQ, RPELEVHYQF, FSFGLTGGF, NMQRWKIA, FNGWLSMYKF, VETETGLQYTF, VALRVNYYLE, DDSRNNGEF, EIRAYLPLTL, YTRIGLDRW, NWDWQDDIE, FNRVGLFYGYDF, LSVSLEYAFEW, and KFHYAGVGVNYS.

Monomer.

The protein resides in the cell outer membrane. Its function is as follows. Forms channels functionally larger than those of classical porins. Functionally, may act as a regulator of the RCS-phosphorelay signal transduction pathway. This chain is Outer membrane porin G (ompG), found in Escherichia coli (strain K12).